Consider the following 71-residue polypeptide: uncharacterized protein (71 aa).

This is an uncharacterized protein from Stutzerimonas stutzeri (strain A1501) (Pseudomonas stutzeri).